Here is a 127-residue protein sequence, read N- to C-terminus: MSVPHLVYVALGGALGAVSRYLIVAWVSNVAGAKFPWGTLAVNLLGSFLLGTAFVYVVEKLHGQPELRSLIMVGFLGALTTFSTFSLEAWSLMQSDQLLQGLAYILMSVILCLFAVSAGIALTRLIL.

Transmembrane regions (helical) follow at residues 7-27 (VYVA…VAWV), 38-58 (GTLA…VYVV), 70-90 (LIMV…LEAW), and 102-122 (LAYI…GIAL). 2 residues coordinate Na(+): Gly77 and Thr80.

This sequence belongs to the fluoride channel Fluc/FEX (TC 1.A.43) family.

Its subcellular location is the cell inner membrane. It carries out the reaction fluoride(in) = fluoride(out). With respect to regulation, na(+) is not transported, but it plays an essential structural role and its presence is essential for fluoride channel function. Fluoride-specific ion channel. Important for reducing fluoride concentration in the cell, thus reducing its toxicity. The protein is Fluoride-specific ion channel FluC of Hahella chejuensis (strain KCTC 2396).